A 77-amino-acid chain; its full sequence is U8-lycotoxin-Ls1i (77 aa).

The N-terminal stretch at 1–20 is a signal peptide; that stretch reads MKLIIFTGLVLFAIVSLIEV. A propeptide spanning residues 21-26 is cleaved from the precursor; it reads QADNER.

Belongs to the neurotoxin 19 (CSTX) family. 08 (U8-Lctx) subfamily. Post-translationally, contains 4 disulfide bonds. In terms of tissue distribution, expressed by the venom gland.

It is found in the secreted. In Lycosa singoriensis (Wolf spider), this protein is U8-lycotoxin-Ls1i.